The sequence spans 712 residues: DNA ligase (712 aa).

The span at 1–22 (MSTQYDSDSSPAASNSGSADPA) shows a compositional bias: low complexity. The segment at 1–23 (MSTQYDSDSSPAASNSGSADPAL) is disordered. An NAD(+)-binding site is contributed by 53-57 (DAEFD). A disordered region spans residues 69–93 (SHPEAVTGPSPTTEVAPSPPESSPF). Residues 104–105 (SL) and Glu-129 contribute to the NAD(+) site. The active-site N6-AMP-lysine intermediate is the Lys-131. 4 residues coordinate NAD(+): Arg-152, Glu-192, Lys-308, and Lys-332. The Zn(2+) site is built by Cys-426, Cys-429, Cys-445, and Cys-451. The 89-residue stretch at 624 to 712 (IQADLLAGLS…GPGKGDAEED (89 aa)) folds into the BRCT domain.

This sequence belongs to the NAD-dependent DNA ligase family. LigA subfamily. Mg(2+) serves as cofactor. Mn(2+) is required as a cofactor.

It carries out the reaction NAD(+) + (deoxyribonucleotide)n-3'-hydroxyl + 5'-phospho-(deoxyribonucleotide)m = (deoxyribonucleotide)n+m + AMP + beta-nicotinamide D-nucleotide.. DNA ligase that catalyzes the formation of phosphodiester linkages between 5'-phosphoryl and 3'-hydroxyl groups in double-stranded DNA using NAD as a coenzyme and as the energy source for the reaction. It is essential for DNA replication and repair of damaged DNA. The polypeptide is DNA ligase (Corynebacterium urealyticum (strain ATCC 43042 / DSM 7109)).